The primary structure comprises 67 residues: Kappa-conotoxin-like Em11.8 (67 aa).

An N-terminal signal peptide occupies residues Met-1–Thr-26. 4 cysteine pairs are disulfide-bonded: Cys-29–Cys-43, Cys-36–Cys-48, Cys-42–Cys-51, and Cys-47–Cys-55. Phe-59 is modified (phenylalanine amide). The propeptide occupies Ala-63–Glu-67.

The protein belongs to the conotoxin I2 superfamily. As to expression, expressed by the venom duct.

Its subcellular location is the secreted. In terms of biological role, inhibits the vertebrate voltage-gated potassium channels Kv1.1/KCNA1 and Kv1.3/KCNA3. In Conus emaciatus (False virgin cone), this protein is Kappa-conotoxin-like Em11.8.